Reading from the N-terminus, the 243-residue chain is Nuclear ubiquitous casein and cyclin-dependent kinase substrate 1 (243 aa).

The disordered stretch occupies residues 1–243; that stretch reads MSRPVRNRKV…SEDEAASGED (243 aa). Tyrosine 13 bears the Phosphotyrosine mark. Phosphoserine is present on residues serine 14 and serine 19. Position 26 is a phosphotyrosine (tyrosine 26). A compositionally biased stretch (basic residues) spans 35 to 51; it reads KKIRSSPREAKNKRRSG. Phosphoserine occurs at positions 54, 58, 61, 73, 75, and 79. Residues 64 to 77 show a composition bias toward basic and acidic residues; sequence KDVKTKKDDSHSAE. Positions 91-100 are enriched in low complexity; that stretch reads QQRQAASKAA. Acidic residues predominate over residues 111–124; that stretch reads VGSEEEPEEDDEAP. 4 positions are modified to phosphoserine: serine 113, serine 130, serine 132, and serine 144. Residues 132 to 145 show a composition bias toward acidic residues; the sequence is SDEDFLMEDDDDSD. Positions 149 to 174 are enriched in basic residues; the sequence is SKKKNKKMVKKSKPERKEKKMPKPRL. Threonine 179 is modified (phosphothreonine). At serine 181 the chain carries Phosphoserine. Basic and acidic residues predominate over residues 197–206; that stretch reads TSKEKTPSPK. Threonine 202 bears the Phosphothreonine mark. 6 positions are modified to phosphoserine: serine 204, serine 214, serine 223, serine 229, serine 234, and serine 240. The segment covering 232–243 has biased composition (acidic residues); that stretch reads EGSEDEAASGED.

Does not interact with RAD51. In terms of processing, phosphorylated in an ATM-dependent manner in response to DNA damage. Phosphorylated by CDK1 and casein kinase.

It localises to the nucleus. It is found in the chromosome. Functionally, chromatin-associated protein involved in DNA repair by promoting homologous recombination (HR). Binds double-stranded DNA (dsDNA) and secondary DNA structures, such as D-loop structures, but with less affinity than RAD51AP1. The polypeptide is Nuclear ubiquitous casein and cyclin-dependent kinase substrate 1 (Rattus norvegicus (Rat)).